A 287-amino-acid polypeptide reads, in one-letter code: RxLR effector protein Avr4 (287 aa).

The N-terminal stretch at 1–24 (MRSLHILLVFTASLLASLTESAKA) is a signal peptide. Positions 42-55 (RFLRAQTDEKNEER) match the RxLR-dEER motif. The segment at 115 to 138 (KYERMQWQKLKEGETLTFMRLGDR) is W1 motif. Positions 148 to 171 (QLLRWVAQKKPVESVYDDLQVAGF) are W2 motif. The W3 motif stretch occupies residues 221–244 (LFEKWAMEGTHIKSVITTLKLNGK). The segment at 246-267 (ASEMANNENFPALLKYVKLYLD) is y motif.

Belongs to the RxLR effector family.

The protein resides in the secreted. The protein localises to the host cytoplasm. Its subcellular location is the host nucleus. It is found in the host nucleolus. It localises to the host cytoskeleton. Its function is as follows. Secreted effector that acts as an elicitor of hypersensitive response (HR) specifically on plants carrying defense protein R4, through its interaction with this protein. This Phytophthora infestans (strain T30-4) (Potato late blight agent) protein is RxLR effector protein Avr4.